Here is a 413-residue protein sequence, read N- to C-terminus: MVSKSIVALAACVAMCVAQPVEKMPVLKDQPAEVLFRESQATVLECVTENGDKDVKYSWQKDGKEFKWQEHNIAQRKDEGSLVFLKPEAKDEGQYRCFAESAAGVATSHIISFRRTYMVVPTTFKTVEKKPVEGSWLKLECSIPEGYPKPTIVWRKQLGEDESIADSILARRITQSPEGDLYFTSVEKEDVSESYKYVCAAKSPAIDGDVPLVGYTIKSLEKNTNQKNGELVPMYVSNDMIAKAGDVTMIYCMYGGVPMAYPNWFKDGKDVNGKPSDRITRHNRTSGKRLFIKETLLEDQGTFTCDVNNEVGKPQKHSVKLTVVSGPRFTKKPEKQVIAKQGQDFVIPCEVSALPAAPVSWTFNAKPISGSRVVASPSGLTIKGIQKSDKGYYGCQAHNEHGDAYAETLVIVA.

The signal sequence occupies residues 1–18; it reads MVSKSIVALAACVAMCVA. Ig-like C2-type domains are found at residues 25–112, 121–215, 233–322, and 327–411; these read PVLK…HIIS, PTTF…LVGY, PMYV…VKLT, and PRFT…TLVI. Intrachain disulfides connect Cys46/Cys97, Cys141/Cys199, Cys252/Cys305, and Cys349/Cys395. N-linked (GlcNAc...) asparagine glycosylation is present at Asn283.

Belongs to the hemolin family. As to expression, hemolymph.

The protein localises to the secreted. Its function is as follows. Insect-immune protein with antimicrobial activity. Forms a protein complex at the bacterial surface. Can inhibit hemocyte aggregation. The protein is Hemolin of Manduca sexta (Tobacco hawkmoth).